The primary structure comprises 348 residues: uncharacterized protein (348 aa).

The protein localises to the virion. This is an uncharacterized protein from Acanthamoeba polyphaga mimivirus (APMV).